We begin with the raw amino-acid sequence, 546 residues long: Probable protein kinase UbiB (546 aa).

One can recognise a Protein kinase domain in the interval 124–502; it reads DFDIKPLASA…HVRQGQSRYL (379 aa). Residues 130 to 138 and K153 contribute to the ATP site; that span reads LASASIAQV. D288 serves as the catalytic Proton acceptor. A run of 2 helical transmembrane segments spans residues 501 to 521 and 522 to 542; these read YLLG…VSRP and EWGL…FVGW.

The protein belongs to the ABC1 family. UbiB subfamily.

Its subcellular location is the cell inner membrane. It participates in cofactor biosynthesis; ubiquinone biosynthesis [regulation]. Functionally, is probably a protein kinase regulator of UbiI activity which is involved in aerobic coenzyme Q (ubiquinone) biosynthesis. The sequence is that of Probable protein kinase UbiB from Escherichia fergusonii (strain ATCC 35469 / DSM 13698 / CCUG 18766 / IAM 14443 / JCM 21226 / LMG 7866 / NBRC 102419 / NCTC 12128 / CDC 0568-73).